Consider the following 889-residue polypeptide: TATA box-binding protein-associated factor RNA polymerase I subunit B (889 aa).

The segment at 1 to 33 adopts an RRN7-type zinc-finger fold; it reads MAPETNEKCKACGGFNFSMIDGFKYCDRCGTLL. Zn(2+) is bound by residues Cys9, Cys12, Cys26, and Cys29. Residues 35 to 101 are B-reader; sequence NFEELEAEEG…DFFSRQALKN (67 aa). Positions 102-113 are B-linker; that stretch reads DELAFPHESTPD. The tract at residues 114-351 is N-terminal cyclin fold; it reads YLYRLGLRLA…SAKEQETKEA (238 aa). Residues 229–253 are disordered; that stretch reads NLDLDSEEDEEEEENPNLNKSMENL. Residues 230-243 are compositionally biased toward acidic residues; the sequence is LDLDSEEDEEEEEN. Positions 352–510 are C-terminal cyclin fold; sequence MTKVDYAEPY…LLVFRLTFDI (159 aa).

Belongs to the RRN7/TAF1B family.

It localises to the nucleus. The protein resides in the nucleolus. Functionally, component of RNA polymerase I core factor complex that acts as a GTF2B/TFIIB-like factor and plays a key role in multiple steps during transcription initiation such as pre-initiation complex (PIC) assembly and postpolymerase recruitment events in polymerase I (Pol I) transcription. Binds rDNA promoters and plays a role in Pol I recruitment. In Caenorhabditis briggsae, this protein is TATA box-binding protein-associated factor RNA polymerase I subunit B.